We begin with the raw amino-acid sequence, 270 residues long: Phosphatidylglycerol--prolipoprotein diacylglyceryl transferase (270 aa).

Helical transmembrane passes span 19-39 (FPVY…LWLA), 54-74 (IDLV…YYVI), 92-112 (QGGL…ILFA), and 116-136 (GLSF…GQAI). Arg138 is an a 1,2-diacyl-sn-glycero-3-phospho-(1'-sn-glycerol) binding site. 3 consecutive transmembrane segments (helical) span residues 178–198 (HPTF…LLAL), 206–226 (GELF…VEGL), and 236–256 (LRIA…FIIV).

Belongs to the Lgt family.

It localises to the cell membrane. It catalyses the reaction L-cysteinyl-[prolipoprotein] + a 1,2-diacyl-sn-glycero-3-phospho-(1'-sn-glycerol) = an S-1,2-diacyl-sn-glyceryl-L-cysteinyl-[prolipoprotein] + sn-glycerol 1-phosphate + H(+). Its pathway is protein modification; lipoprotein biosynthesis (diacylglyceryl transfer). Catalyzes the transfer of the diacylglyceryl group from phosphatidylglycerol to the sulfhydryl group of the N-terminal cysteine of a prolipoprotein, the first step in the formation of mature lipoproteins. This is Phosphatidylglycerol--prolipoprotein diacylglyceryl transferase from Bacillus mycoides (strain KBAB4) (Bacillus weihenstephanensis).